We begin with the raw amino-acid sequence, 858 residues long: DNA mismatch repair protein MutS (858 aa).

ATP is bound at residue 618-625; the sequence is GPNMGGKS.

The protein belongs to the DNA mismatch repair MutS family.

This protein is involved in the repair of mismatches in DNA. It is possible that it carries out the mismatch recognition step. This protein has a weak ATPase activity. The protein is DNA mismatch repair protein MutS of Shewanella woodyi (strain ATCC 51908 / MS32).